The primary structure comprises 490 residues: Dual specificity protein kinase CLK3 (490 aa).

Tyr-7 bears the Phosphotyrosine mark. 6 positions are modified to phosphoserine: Ser-9, Ser-49, Ser-51, Ser-67, Ser-76, and Ser-78. Residues Arg-22–Asp-138 are disordered. Basic and acidic residues-rich tracts occupy residues Tyr-26 to Pro-56 and Glu-63 to Ser-76. Over residues Thr-103–Arg-116 the composition is skewed to basic residues. Residues Ser-117 to Lys-130 show a composition bias toward low complexity. A Phosphoserine modification is found at Ser-135. The region spanning Tyr-156–Phe-472 is the Protein kinase domain. ATP-binding positions include Leu-162–Val-170 and Lys-186. The active-site Proton acceptor is the Asp-283.

It belongs to the protein kinase superfamily. CMGC Ser/Thr protein kinase family. Lammer subfamily. Post-translationally, autophosphorylates on all three types of residues.

It localises to the nucleus. Its subcellular location is the cytoplasm. The protein localises to the cytoplasmic vesicle. It is found in the secretory vesicle. The protein resides in the acrosome. It carries out the reaction L-seryl-[protein] + ATP = O-phospho-L-seryl-[protein] + ADP + H(+). It catalyses the reaction L-threonyl-[protein] + ATP = O-phospho-L-threonyl-[protein] + ADP + H(+). The enzyme catalyses L-tyrosyl-[protein] + ATP = O-phospho-L-tyrosyl-[protein] + ADP + H(+). Its activity is regulated as follows. Leucettine L41 inhibits its kinase activity and affects the regulation of alternative splicing mediated by phosphorylation of SR proteins. In terms of biological role, dual specificity kinase acting on both serine/threonine and tyrosine-containing substrates. Phosphorylates serine- and arginine-rich (SR) proteins of the spliceosomal complex. May be a constituent of a network of regulatory mechanisms that enable SR proteins to control RNA splicing and can cause redistribution of SR proteins from speckles to a diffuse nucleoplasmic distribution. Phosphorylates SRSF1 and SRSF3. Regulates the alternative splicing of tissue factor (F3) pre-mRNA in endothelial cells. This chain is Dual specificity protein kinase CLK3 (CLK3), found in Bos taurus (Bovine).